The sequence spans 481 residues: Velvet complex subunit B (481 aa).

Disordered stretches follow at residues 1 to 157 (MNSA…YSKI) and 241 to 339 (GTGA…NGYG). 3 stretches are compositionally biased toward pro residues: residues 36 to 45 (HPPPPLPPPS), 53 to 62 (PPLPPPPSAP), and 96 to 112 (PYAP…QYPR). Residues 160–464 (GSGWKYSLDV…ANQGIKIPIR (305 aa)) form the Velvet domain. Low complexity-rich tracts occupy residues 241–255 (GTGA…TYSS) and 293–325 (QQSY…SAEP).

The protein belongs to the velvet family. VelB subfamily. Component of the heterotrimeric velvet complex composed of laeA, veA and velB; VeA acting as a bridging protein between laeA and velB. Forms a heterodimeric complex with vosA; the formation of the velB-vosA complex is light-dependent.

Its subcellular location is the nucleus. The protein resides in the cytoplasm. Its function is as follows. Component of the velvet transcription factor complex that controls sexual/asexual developmental ratio in response to light, promoting sexual development in the darkness while stimulating asexual sporulation under illumination. The velvet complex acts as a global regulator for secondary metabolite gene expression. Component of the velB-VosA heterodimeric complex that plays a dual role in activating genes associated with spore maturation and repressing certain development-associated genes. The velB-VosA complex binds DNA through the DNA-binding domain of vosA that recognizes an 11-nucleotide consensus sequence 5'-CTGGCCGCGGC-3' consisting of two motifs in the promoters of key developmental regulatory genes. Controls the biosynthetic gene cluster for beauvericin, a depsipeptide mycotoxin that functions as a virulence determinant. Also regulates chromatin structure and transcription of siderophore biosynthetic genes and is required for infection of tomato plants. This Fusarium oxysporum f. sp. lycopersici (strain 4287 / CBS 123668 / FGSC 9935 / NRRL 34936) (Fusarium vascular wilt of tomato) protein is Velvet complex subunit B.